The following is a 500-amino-acid chain: Protein farnesyltransferase subunit beta (500 aa).

The tract at residues 117–140 (LQNDDNNGNNNNRENNQNGGGFGG) is disordered. The segment covering 119 to 133 (NDDNNGNNNNRENNQ) has biased composition (low complexity). PFTB repeat units follow at residues 121-162 (DNNG…YVIG), 172-213 (REAM…SMLN), 220-261 (ERGV…SILN), 268-309 (MNSL…IIIQ), and 343-384 (QEYV…SLSQ). (2E,6E)-farnesyl diphosphate-binding positions include 246-249 (HGGY) and 288-291 (RTNK). 2 residues coordinate Zn(2+): Asp-294 and Cys-296. 297-300 (YSYW) lines the (2E,6E)-farnesyl diphosphate pocket. A Zn(2+)-binding site is contributed by His-372. Residues 402 to 451 (FEQPSPPINKKSTNVFTISNNNNNNNNKNNNSDDNNNNSNNNNNNSENQL) are disordered. The span at 420–449 (SNNNNNNNNKNNNSDDNNNNSNNNNNNSEN) shows a compositional bias: low complexity.

Belongs to the protein prenyltransferase subunit beta family. As to quaternary structure, heterodimer of fntA and fntB (farnesyltransferase). Heterodimer of an alpha and a beta subunit. Zn(2+) is required as a cofactor.

The enzyme catalyses L-cysteinyl-[protein] + (2E,6E)-farnesyl diphosphate = S-(2E,6E)-farnesyl-L-cysteinyl-[protein] + diphosphate. Its function is as follows. Catalyzes the transfer of a farnesyl moiety from farnesyl diphosphate to a cysteine at the fourth position from the C-terminus of several proteins. The beta subunit is responsible for peptide-binding. This chain is Protein farnesyltransferase subunit beta (fntB), found in Dictyostelium discoideum (Social amoeba).